Consider the following 307-residue polypeptide: Methionyl-tRNA formyltransferase (307 aa).

108–111 (SLLP) is a binding site for (6S)-5,6,7,8-tetrahydrofolate.

It belongs to the Fmt family.

The catalysed reaction is L-methionyl-tRNA(fMet) + (6R)-10-formyltetrahydrofolate = N-formyl-L-methionyl-tRNA(fMet) + (6S)-5,6,7,8-tetrahydrofolate + H(+). Its function is as follows. Attaches a formyl group to the free amino group of methionyl-tRNA(fMet). The formyl group appears to play a dual role in the initiator identity of N-formylmethionyl-tRNA by promoting its recognition by IF2 and preventing the misappropriation of this tRNA by the elongation apparatus. The chain is Methionyl-tRNA formyltransferase from Stenotrophomonas maltophilia (strain K279a).